Here is a 113-residue protein sequence, read N- to C-terminus: UPF0321 protein C569.02c (113 aa).

The first 17 residues, 1-17, serve as a signal peptide directing secretion; sequence MLLLFCICCAFIKLVLA. N-linked (GlcNAc...) asparagine glycosylation is found at N20, N39, and N65.

This sequence belongs to the UPF0321 family.

This chain is UPF0321 protein C569.02c, found in Schizosaccharomyces pombe (strain 972 / ATCC 24843) (Fission yeast).